Reading from the N-terminus, the 396-residue chain is Cysteine desulfurase (396 aa).

Residues 71–72 (GT), N148, Q176, and 196–198 (SGH) contribute to the pyridoxal 5'-phosphate site. Position 199 is an N6-(pyridoxal phosphate)lysine (K199). T231 lines the pyridoxal 5'-phosphate pocket. C319 serves as the catalytic Cysteine persulfide intermediate. C319 contributes to the [2Fe-2S] cluster binding site.

The protein belongs to the class-V pyridoxal-phosphate-dependent aminotransferase family. NifS/IscS subfamily. Homodimer. Requires pyridoxal 5'-phosphate as cofactor.

It carries out the reaction (sulfur carrier)-H + L-cysteine = (sulfur carrier)-SH + L-alanine. In terms of biological role, catalyzes the removal of elemental sulfur atoms from cysteine to produce alanine. Seems to participate in the biosynthesis of the nitrogenase metalloclusters by providing the inorganic sulfur required for the Fe-S core formation. The chain is Cysteine desulfurase from Azotobacter chroococcum mcd 1.